A 436-amino-acid polypeptide reads, in one-letter code: Trigger factor (436 aa).

Residues glycine 163–proline 248 enclose the PPIase FKBP-type domain.

This sequence belongs to the FKBP-type PPIase family. Tig subfamily.

It is found in the cytoplasm. The enzyme catalyses [protein]-peptidylproline (omega=180) = [protein]-peptidylproline (omega=0). Functionally, involved in protein export. Acts as a chaperone by maintaining the newly synthesized protein in an open conformation. Functions as a peptidyl-prolyl cis-trans isomerase. The polypeptide is Trigger factor (Bordetella petrii (strain ATCC BAA-461 / DSM 12804 / CCUG 43448)).